A 183-amino-acid polypeptide reads, in one-letter code: Gamma-crystallin N-A (183 aa).

Beta/gamma crystallin 'Greek key' domains are found at residues 6-46, 47-89, 95-136, and 138-180; these read GKIV…RVES, GAWV…KPIK, YRME…KVYG, and GAWA…RRVV.

The protein belongs to the beta/gamma-crystallin family. Monomer.

Crystallins are the dominant structural components of the vertebrate eye lens. The polypeptide is Gamma-crystallin N-A (crygna) (Danio rerio (Zebrafish)).